A 150-amino-acid polypeptide reads, in one-letter code: Small ribosomal subunit protein uS7cz/uS7cy (150 aa).

This sequence belongs to the universal ribosomal protein uS7 family. As to quaternary structure, part of the 30S ribosomal subunit.

It is found in the plastid. Its subcellular location is the chloroplast. Functionally, one of the primary rRNA binding proteins, it binds directly to 16S rRNA where it nucleates assembly of the head domain of the 30S subunit. The chain is Small ribosomal subunit protein uS7cz/uS7cy (rps7-A) from Adiantum capillus-veneris (Maidenhair fern).